The following is a 278-amino-acid chain: Type II restriction enzyme NgoPII (278 aa).

It belongs to the NgoPII type II restriction endonuclease family.

It carries out the reaction Endonucleolytic cleavage of DNA to give specific double-stranded fragments with terminal 5'-phosphates.. In terms of biological role, a P subtype restriction enzyme that recognizes the double-stranded sequence 5'-GGCC-3' and cleaves after G-2. The protein is Type II restriction enzyme NgoPII (ngoPIIR) of Neisseria gonorrhoeae.